The chain runs to 439 residues: Xaa-Pro dipeptidase (439 aa).

Residues Asp244, Asp255, His335, Glu380, and Glu419 each coordinate Mn(2+).

It belongs to the peptidase M24B family. Bacterial-type prolidase subfamily. Mn(2+) serves as cofactor.

The catalysed reaction is Xaa-L-Pro dipeptide + H2O = an L-alpha-amino acid + L-proline. Splits dipeptides with a prolyl residue in the C-terminal position. This chain is Xaa-Pro dipeptidase, found in Shewanella amazonensis (strain ATCC BAA-1098 / SB2B).